The following is a 199-amino-acid chain: UPF0301 protein Ajs_3573 (199 aa).

It belongs to the UPF0301 (AlgH) family.

The sequence is that of UPF0301 protein Ajs_3573 from Acidovorax sp. (strain JS42).